Here is a 342-residue protein sequence, read N- to C-terminus: Foldase protein PrsA (342 aa).

The N-terminal stretch at 1–22 (MVSVKKIVASALVGVLMFSAVG) is a signal peptide. Residue C23 is the site of N-palmitoyl cysteine attachment. Residue C23 is the site of S-diacylglycerol cysteine attachment. One can recognise a PpiC domain in the interval 190–284 (AKGVLARHLL…FGYHIIQAGA (95 aa)).

Belongs to the PrsA family.

Its subcellular location is the cell membrane. The catalysed reaction is [protein]-peptidylproline (omega=180) = [protein]-peptidylproline (omega=0). Plays a major role in protein secretion by helping the post-translocational extracellular folding of several secreted proteins. This is Foldase protein PrsA from Clostridium perfringens (strain SM101 / Type A).